Here is a 284-residue protein sequence, read N- to C-terminus: Avenin-like b10 (284 aa).

A signal peptide spans 1 to 18 (MKVFILALLALAATTAIA).

It belongs to the prolamin family. In terms of processing, contains disulfide bonds.

Functionally, seed storage protein. Might be integrated via inter-chain disulfide bonds within the glutenin polymer. This chain is Avenin-like b10, found in Triticum aestivum (Wheat).